The sequence spans 167 residues: Protein-export protein SecB (167 aa).

This sequence belongs to the SecB family. In terms of assembly, homotetramer, a dimer of dimers. One homotetramer interacts with 1 SecA dimer.

It is found in the cytoplasm. Its function is as follows. One of the proteins required for the normal export of preproteins out of the cell cytoplasm. It is a molecular chaperone that binds to a subset of precursor proteins, maintaining them in a translocation-competent state. It also specifically binds to its receptor SecA. This Wolbachia pipientis wMel protein is Protein-export protein SecB.